Here is a 460-residue protein sequence, read N- to C-terminus: Mitochondrial distribution and morphology protein 10 (460 aa).

It belongs to the MDM10 family. As to quaternary structure, component of the ER-mitochondria encounter structure (ERMES) or MDM complex, composed of MMM1, MDM10, MDM12 and MDM34. Associates with the mitochondrial outer membrane sorting assembly machinery SAM(core) complex.

Its subcellular location is the mitochondrion outer membrane. Its function is as follows. Component of the ERMES/MDM complex, which serves as a molecular tether to connect the endoplasmic reticulum and mitochondria. Components of this complex are involved in the control of mitochondrial shape and protein biogenesis and may function in phospholipid exchange. MDM10 is involved in the late assembly steps of the general translocase of the mitochondrial outer membrane (TOM complex). Functions in the TOM40-specific route of the assembly of outer membrane beta-barrel proteins, including the association of TOM40 with the receptor TOM22 and small TOM proteins. Can associate with the SAM(core) complex as well as the MDM12-MMM1 complex, both involved in late steps of the major beta-barrel assembly pathway, that is responsible for biogenesis of all outer membrane beta-barrel proteins. May act as a switch that shuttles between both complexes and channels precursor proteins into the TOM40-specific pathway. Plays a role in mitochondrial morphology and in the inheritance of mitochondria. The protein is Mitochondrial distribution and morphology protein 10 of Candida glabrata (strain ATCC 2001 / BCRC 20586 / JCM 3761 / NBRC 0622 / NRRL Y-65 / CBS 138) (Yeast).